The sequence spans 129 residues: Small ribosomal subunit protein uS11 (129 aa).

This sequence belongs to the universal ribosomal protein uS11 family. As to quaternary structure, part of the 30S ribosomal subunit. Interacts with proteins S7 and S18. Binds to IF-3.

Functionally, located on the platform of the 30S subunit, it bridges several disparate RNA helices of the 16S rRNA. Forms part of the Shine-Dalgarno cleft in the 70S ribosome. This is Small ribosomal subunit protein uS11 from Vibrio campbellii (strain ATCC BAA-1116).